The primary structure comprises 133 residues: 14 kDa fatty acid-binding protein (133 aa).

(5Z,8Z,11Z,14Z)-eicosatetraenoate-binding positions include Arg107 and Arg127 to Tyr129. (9Z)-octadecenoate-binding positions include Arg107 and Arg127 to Tyr129.

This sequence belongs to the calycin superfamily. Fatty-acid binding protein (FABP) family. Tubercles, muscle layers and body.

The protein resides in the cytoplasm. In terms of biological role, may play a role in the transport of fatty acids. Binds various fatty acids, such as arachidonic, oleic, palmitic and linolenic acid (in vitro). The protein is 14 kDa fatty acid-binding protein of Schistosoma mansoni (Blood fluke).